The primary structure comprises 155 residues: Large ribosomal subunit protein uL15 (155 aa).

The tract at residues 1–63 (MKLHELAPNP…QMPLTRRLPK (63 aa)) is disordered. Composition is skewed to gly residues over residues 21-31 (RGIGSGLGKTS) and 42-52 (SGGGVRPGFEG).

The protein belongs to the universal ribosomal protein uL15 family. Part of the 50S ribosomal subunit.

Binds to the 23S rRNA. This Symbiobacterium thermophilum (strain DSM 24528 / JCM 14929 / IAM 14863 / T) protein is Large ribosomal subunit protein uL15.